A 513-amino-acid chain; its full sequence is Leucine-rich repeat-containing protein 24 (513 aa).

A signal peptide spans 1–20 (MALRAPALLPLLLLLLPLRA). The LRRNT domain maps to 21–50 (AGCPAACRCYSATVECGALRLRVVPLGIPP). LRR repeat units follow at residues 51–72 (GTQT…ALAP), 75–96 (ALRR…AFRA), 99–120 (RLLE…AFVG), 123–144 (QLRV…TFLH), 147–168 (RLQE…ALAG), and 171–192 (SLAL…ALQP). The region spanning 204–259 (NPWRCDCALHWLGAWIKEGGQRLLTSRDRKIMCAEPPRLALQSLLDVSHSSLICIP) is the LRRCT domain. In terms of domain architecture, Ig-like C2-type spans 260 to 361 (PSVHVQPLEL…GAARVPFRLL (102 aa)). C281 and C345 form a disulfide bridge. N-linked (GlcNAc...) asparagine glycosylation is found at N334 and N363. A disordered region spans residues 365–391 (SRQQPQQPAQPPPPAARPAGSEPRPEA). The chain crosses the membrane as a helical span at residues 406-426 (AIAAAIALLALTALLLVAMIC).

The protein resides in the membrane. In Homo sapiens (Human), this protein is Leucine-rich repeat-containing protein 24 (LRRC24).